Here is a 532-residue protein sequence, read N- to C-terminus: BTB/POZ domain-containing protein 3 (532 aa).

The tract at residues 23–54 (KNRSKKSSKKTNTGGGGGGSSSSSSSSSNSKL) is disordered. Residues 43–53 (SSSSSSSSNSK) show a composition bias toward low complexity. One can recognise a BTB domain in the interval 130–200 (ADVHFVVGPP…IYCDEIDLAA (71 aa)). The 66-residue stretch at 245–310 (FEEPDLTQRC…NWAEVECQRQ (66 aa)) folds into the BACK domain.

As to expression, expressed in visual cortex. Expressed in visual cortex layer IV neurons.

Its subcellular location is the cytoplasm. The protein resides in the cytosol. It localises to the nucleus. Acts as a key regulator of dendritic field orientation during development of sensory cortex. Also directs dendrites toward active axon terminals when ectopically expressed. The protein is BTB/POZ domain-containing protein 3 (BTBD3) of Mustela putorius furo (European domestic ferret).